Consider the following 122-residue polypeptide: UPF0102 protein xcc-b100_3645 (122 aa).

It belongs to the UPF0102 family.

This Xanthomonas campestris pv. campestris (strain B100) protein is UPF0102 protein xcc-b100_3645.